The chain runs to 248 residues: Probable transcriptional regulatory protein BH14810 (248 aa).

It belongs to the TACO1 family.

The protein localises to the cytoplasm. The chain is Probable transcriptional regulatory protein BH14810 from Bartonella henselae (strain ATCC 49882 / DSM 28221 / CCUG 30454 / Houston 1) (Rochalimaea henselae).